The primary structure comprises 568 residues: General O-oligosaccharyltransferase (568 aa).

The next 12 membrane-spanning stretches (helical) occupy residues 17–37 (VAVMRFLLLLLTAVLISLAWL), 46–66 (LTFASEMLSFAAFLSLLALFL), 78–98 (LALPVVFIPMIQWGFGLVVDF), 101–121 (ALLSSAYLLGFWLTMLLGYNL), 132–152 (FTLSSYLLFAVALLTSLIACI), 176–196 (FAQPNNMSTFLILGLLGCLYL), 214–234 (IVFAITLSQSRTAWVFGLFFI), 251–271 (YAVLLWAIGFFAVGLLFPRFT), 349–369 (LLVWNGWLLGGLITICILIWI), 376–396 (AKTTESIIACLMVSAVWIHTL), 397–417 (LEYPLQYAYFLLPVGFLMGLI), and 429–449 (VPVSVIRSIWVIGIMLLALIW).

This sequence belongs to the PglL O-oligosaccharyltransferase family.

It is found in the cell membrane. Its function is as follows. Catalyzes the O-glycosylation of multiple protein targets. Is responsible for general protein glycosylation within A.baylyi ADP1. Does not act as an O-antigen ligase. This is General O-oligosaccharyltransferase from Acinetobacter baylyi (strain ATCC 33305 / BD413 / ADP1).